A 268-amino-acid chain; its full sequence is MQKTNKFLKIGTKEFKSRLLVGTGKYSSLEVMQKSLINTKCEIVTVAVRRVQGLEHGHKGLMESIDWKRIWMLPNTAGCSNAEEAIRIAKLGRELAKLAGQENNNFVKLEVIPDKKYLLPDPIGTLKAAEQLVKEGFTVLPYINSDPLIAKQLEEIGCATVMPLGSPIGSAQGIRNAANIAMIIAESRIPIIIDAGIGVPSEAAQALEMGADGVLINSAIALAENPILMAQAFSKATEAGRDGYLSGRLKENPLASPSSPLEGVISNN.

K108 (schiff-base intermediate with DXP) is an active-site residue. 1-deoxy-D-xylulose 5-phosphate-binding positions include G169, 195-196 (AG), and 217-218 (NS). The disordered stretch occupies residues 248-268 (RLKENPLASPSSPLEGVISNN). Over residues 255 to 268 (ASPSSPLEGVISNN) the composition is skewed to polar residues.

It belongs to the ThiG family. In terms of assembly, homotetramer. Forms heterodimers with either ThiH or ThiS.

Its subcellular location is the cytoplasm. The enzyme catalyses [ThiS sulfur-carrier protein]-C-terminal-Gly-aminoethanethioate + 2-iminoacetate + 1-deoxy-D-xylulose 5-phosphate = [ThiS sulfur-carrier protein]-C-terminal Gly-Gly + 2-[(2R,5Z)-2-carboxy-4-methylthiazol-5(2H)-ylidene]ethyl phosphate + 2 H2O + H(+). The protein operates within cofactor biosynthesis; thiamine diphosphate biosynthesis. In terms of biological role, catalyzes the rearrangement of 1-deoxy-D-xylulose 5-phosphate (DXP) to produce the thiazole phosphate moiety of thiamine. Sulfur is provided by the thiocarboxylate moiety of the carrier protein ThiS. In vitro, sulfur can be provided by H(2)S. In Prochlorococcus marinus (strain NATL1A), this protein is Thiazole synthase.